We begin with the raw amino-acid sequence, 248 residues long: Triosephosphate isomerase (248 aa).

9-11 (NWK) contributes to the substrate binding site. H94 acts as the Electrophile in catalysis. Catalysis depends on E166, which acts as the Proton acceptor. Residues G172, S212, and 233–234 (GG) each bind substrate.

This sequence belongs to the triosephosphate isomerase family. As to quaternary structure, homodimer.

It is found in the cytoplasm. The catalysed reaction is D-glyceraldehyde 3-phosphate = dihydroxyacetone phosphate. It participates in carbohydrate biosynthesis; gluconeogenesis. Its pathway is carbohydrate degradation; glycolysis; D-glyceraldehyde 3-phosphate from glycerone phosphate: step 1/1. Its function is as follows. Involved in the gluconeogenesis. Catalyzes stereospecifically the conversion of dihydroxyacetone phosphate (DHAP) to D-glyceraldehyde-3-phosphate (G3P). This is Triosephosphate isomerase from Clostridium beijerinckii (strain ATCC 51743 / NCIMB 8052) (Clostridium acetobutylicum).